A 185-amino-acid chain; its full sequence is Ribosome-recycling factor (185 aa).

This sequence belongs to the RRF family.

The protein localises to the cytoplasm. Its function is as follows. Responsible for the release of ribosomes from messenger RNA at the termination of protein biosynthesis. May increase the efficiency of translation by recycling ribosomes from one round of translation to another. This is Ribosome-recycling factor from Streptococcus uberis (strain ATCC BAA-854 / 0140J).